A 248-amino-acid chain; its full sequence is tRNA (guanine-N(1)-)-methyltransferase (248 aa).

Residues Gly-113 and 133-138 contribute to the S-adenosyl-L-methionine site; that span reads IGDYVL.

It belongs to the RNA methyltransferase TrmD family. In terms of assembly, homodimer.

The protein localises to the cytoplasm. It carries out the reaction guanosine(37) in tRNA + S-adenosyl-L-methionine = N(1)-methylguanosine(37) in tRNA + S-adenosyl-L-homocysteine + H(+). Specifically methylates guanosine-37 in various tRNAs. This Shewanella halifaxensis (strain HAW-EB4) protein is tRNA (guanine-N(1)-)-methyltransferase.